A 253-amino-acid chain; its full sequence is E3 ubiquitin-protein ligase MARCHF3 (253 aa).

The segment at 63–123 (SPFNDRPMCR…ELCHFRFAVE (61 aa)) adopts an RING-CH-type zinc-finger fold. Residues cysteine 71, cysteine 74, cysteine 87, cysteine 89, histidine 97, cysteine 100, cysteine 113, and cysteine 116 each coordinate Zn(2+). The next 2 helical transmembrane spans lie at 145 to 165 (LFGDMVCFLFITPLATISGWL) and 182 to 202 (AVGLIALTVALFTIYLFWTLV). Phosphoserine occurs at positions 237 and 243.

Interacts with MARCHF2 and STX6. In terms of tissue distribution, expressed predominantly in lung, colon and spleen. Present in liver (at protein level).

Its subcellular location is the cytoplasmic vesicle membrane. It is found in the early endosome membrane. The enzyme catalyses S-ubiquitinyl-[E2 ubiquitin-conjugating enzyme]-L-cysteine + [acceptor protein]-L-lysine = [E2 ubiquitin-conjugating enzyme]-L-cysteine + N(6)-ubiquitinyl-[acceptor protein]-L-lysine.. It functions in the pathway protein modification; protein ubiquitination. In terms of biological role, E3 ubiquitin-protein ligase which may be involved in endosomal trafficking. E3 ubiquitin ligases accept ubiquitin from an E2 ubiquitin-conjugating enzyme in the form of a thioester and then directly transfer the ubiquitin to targeted substrates. This chain is E3 ubiquitin-protein ligase MARCHF3 (Marchf3), found in Rattus norvegicus (Rat).